Here is a 249-residue protein sequence, read N- to C-terminus: MIRILVSNDDGVNAPGIKALTEALAEIATVMTVAPDRNCSGASNSLTLTNPLRINRLDNGYISVHGTPTDCVHLAIRELCDGEPDMVVSGINAGANMGDDTLYSGTVAAAMEGRFLGFPAVAISLNGKALKHYHSAAVYARRIVQGLLAHPIASDQILNINVPDLPLDEIKGIRVTRLGARHKAEGIVRTQDPAGREIFWLGPPGVEQDASEGTDFHAIAHGYVSITPLTVDLTAYRQLSVLQDWVDKI.

Positions 9, 10, 40, and 92 each coordinate a divalent metal cation.

The protein belongs to the SurE nucleotidase family. It depends on a divalent metal cation as a cofactor.

It is found in the cytoplasm. The catalysed reaction is a ribonucleoside 5'-phosphate + H2O = a ribonucleoside + phosphate. In terms of biological role, nucleotidase that shows phosphatase activity on nucleoside 5'-monophosphates. This Shewanella sp. (strain MR-4) protein is 5'-nucleotidase SurE.